Here is a 355-residue protein sequence, read N- to C-terminus: S-adenosylmethionine:tRNA ribosyltransferase-isomerase (355 aa).

It belongs to the QueA family. Monomer.

It is found in the cytoplasm. The enzyme catalyses 7-aminomethyl-7-carbaguanosine(34) in tRNA + S-adenosyl-L-methionine = epoxyqueuosine(34) in tRNA + adenine + L-methionine + 2 H(+). It participates in tRNA modification; tRNA-queuosine biosynthesis. Transfers and isomerizes the ribose moiety from AdoMet to the 7-aminomethyl group of 7-deazaguanine (preQ1-tRNA) to give epoxyqueuosine (oQ-tRNA). The protein is S-adenosylmethionine:tRNA ribosyltransferase-isomerase of Burkholderia cenocepacia (strain ATCC BAA-245 / DSM 16553 / LMG 16656 / NCTC 13227 / J2315 / CF5610) (Burkholderia cepacia (strain J2315)).